The chain runs to 237 residues: MTRGEMKYEGKAKRVYATENPHEYVVEYKDDATAFNAQKRGEWAGKGATNNAITAHLYPQLEAAGIPTHFLEKLSDREQRVKAVTIVPVEVIVRNVAAGSFSKRLGVEEGTPLPRPVVEYCYKSDALGDPLINTDTAVALGWASEDDLKRIRELALQIRDFLVPYFEKRGVRLIDFKLEFGKLPSGEIVLADEISPDTCRFWDAETNEKMDKDRFRRDLGGEAEAYAEMLKRVTREV.

Belongs to the SAICAR synthetase family.

It carries out the reaction 5-amino-1-(5-phospho-D-ribosyl)imidazole-4-carboxylate + L-aspartate + ATP = (2S)-2-[5-amino-1-(5-phospho-beta-D-ribosyl)imidazole-4-carboxamido]succinate + ADP + phosphate + 2 H(+). It participates in purine metabolism; IMP biosynthesis via de novo pathway; 5-amino-1-(5-phospho-D-ribosyl)imidazole-4-carboxamide from 5-amino-1-(5-phospho-D-ribosyl)imidazole-4-carboxylate: step 1/2. This is Phosphoribosylaminoimidazole-succinocarboxamide synthase from Deinococcus radiodurans (strain ATCC 13939 / DSM 20539 / JCM 16871 / CCUG 27074 / LMG 4051 / NBRC 15346 / NCIMB 9279 / VKM B-1422 / R1).